A 969-amino-acid polypeptide reads, in one-letter code: Translation initiation factor IF-2 (969 aa).

The disordered stretch occupies residues 96 to 377 (KRDPAEPVRA…NSRNQHQDRR (282 aa)). Composition is skewed to low complexity over residues 105 to 157 (AEPA…QAEP), 167 to 181 (AAPA…EPAK), and 216 to 252 (PSAP…PAAP). Residues 253–264 (DRAREEARRAAE) are compositionally biased toward basic and acidic residues. Positions 357–366 (RAGGKGGRGG) are enriched in gly residues. The tr-type G domain occupies 470–637 (PRAPVVTVMG…NVLLQAEILE (168 aa)). Residues 479–486 (GHVDHGKT) are G1. 479-486 (GHVDHGKT) is a binding site for GTP. The segment at 504–508 (GITQH) is G2. A G3 region spans residues 525–528 (DTPG). GTP-binding positions include 525–529 (DTPGH) and 579–582 (NKID). The G4 stretch occupies residues 579–582 (NKID). Positions 615–617 (SAK) are G5.

This sequence belongs to the TRAFAC class translation factor GTPase superfamily. Classic translation factor GTPase family. IF-2 subfamily.

The protein resides in the cytoplasm. Functionally, one of the essential components for the initiation of protein synthesis. Protects formylmethionyl-tRNA from spontaneous hydrolysis and promotes its binding to the 30S ribosomal subunits. Also involved in the hydrolysis of GTP during the formation of the 70S ribosomal complex. This is Translation initiation factor IF-2 from Bordetella parapertussis (strain 12822 / ATCC BAA-587 / NCTC 13253).